The sequence spans 905 residues: Probable coatomer subunit gamma (905 aa).

HEAT repeat units lie at residues 265 to 302 (TQFR…NISD), 303 to 340 (DDLQ…TRPH), 374 to 412 (DESV…KFPR), 414 to 450 (QDSM…YIPE), and 525 to 563 (KFVQ…RDAF). Serine 604 carries the phosphoserine modification.

Belongs to the COPG family. In terms of assembly, oligomeric complex that consists of at least the alpha, beta, beta', gamma, delta, epsilon and zeta subunits.

It localises to the cytoplasm. The protein localises to the golgi apparatus membrane. Its subcellular location is the cytoplasmic vesicle. It is found in the COPI-coated vesicle membrane. In terms of biological role, the coatomer is a cytosolic protein complex that binds to dilysine motifs and reversibly associates with Golgi non-clathrin-coated vesicles, which further mediate biosynthetic protein transport from the ER, via the Golgi up to the trans Golgi network. Coatomer complex is required for budding from Golgi membranes, and is essential for the retrograde Golgi-to-ER transport of dilysine-tagged proteins. In Schizosaccharomyces pombe (strain 972 / ATCC 24843) (Fission yeast), this protein is Probable coatomer subunit gamma (sec21).